A 154-amino-acid polypeptide reads, in one-letter code: Ribonuclease H (154 aa).

The RNase H type-1 domain occupies Met-1–Glu-142. Mg(2+) contacts are provided by Asp-10, Glu-48, Asp-70, and Asp-134.

It belongs to the RNase H family. As to quaternary structure, monomer. Requires Mg(2+) as cofactor.

The protein resides in the cytoplasm. It catalyses the reaction Endonucleolytic cleavage to 5'-phosphomonoester.. Functionally, endonuclease that specifically degrades the RNA of RNA-DNA hybrids. This Vibrio campbellii (strain ATCC BAA-1116) protein is Ribonuclease H.